Here is a 258-residue protein sequence, read N- to C-terminus: MKKKFFERVYSISKEDVEKVEEYFFDKGISNYYFYETKEGVFLVLVSEKKNFEENFSYKLVEERETSSDEWIKNLISKPFEFIDGVYIDPDYHEINDKLVIRITPGLAFGTGLHTTTKLAATLLKKYLRQGMDVLDLGCGSGILSILAKKLGASGVLAVDNDKMAVESAIENVEKNNVEVEIRVSDLLKNVDGKYDLIVSNIIADVLVKALEDMPKFLKKNGIVILSGIIDSKLYLFEHLNIVEHRRKDEWNALVIKF.

S-adenosyl-L-methionine-binding residues include Thr117, Gly138, Asp160, and Asn201.

Belongs to the methyltransferase superfamily. PrmA family.

It is found in the cytoplasm. The enzyme catalyses L-lysyl-[protein] + 3 S-adenosyl-L-methionine = N(6),N(6),N(6)-trimethyl-L-lysyl-[protein] + 3 S-adenosyl-L-homocysteine + 3 H(+). Methylates ribosomal protein L11. The chain is Ribosomal protein L11 methyltransferase from Thermosipho melanesiensis (strain DSM 12029 / CIP 104789 / BI429).